The primary structure comprises 93 residues: Protein FMP16, mitochondrial (93 aa).

Residues 1 to 25 constitute a mitochondrion transit peptide; the sequence is MLRTTFLRTPRQLMRKSPRASFSIV. The tract at residues 30-93 is disordered; the sequence is FPHLKNNQDE…EQNRPDDGVY (64 aa). Positions 35 to 93 are enriched in basic and acidic residues; it reads NNQDEAEKKEQGLFDSNKKRLDTLEHGKNPDYKQPGMEDLKKKGDDARIEQNRPDDGVY.

It is found in the mitochondrion. The sequence is that of Protein FMP16, mitochondrial (FMP16) from Saccharomyces cerevisiae (strain ATCC 204508 / S288c) (Baker's yeast).